The primary structure comprises 483 residues: Altronate oxidoreductase (483 aa).

18–29 (IIQFGEGNFLRA) contacts NAD(+).

The protein belongs to the mannitol dehydrogenase family. UxaB subfamily.

It catalyses the reaction D-altronate + NAD(+) = keto-D-tagaturonate + NADH + H(+). Its pathway is carbohydrate metabolism; pentose and glucuronate interconversion. The protein is Altronate oxidoreductase of Escherichia coli O17:K52:H18 (strain UMN026 / ExPEC).